We begin with the raw amino-acid sequence, 462 residues long: Argininosuccinate lyase (462 aa).

Belongs to the lyase 1 family. Argininosuccinate lyase subfamily.

It is found in the cytoplasm. The catalysed reaction is 2-(N(omega)-L-arginino)succinate = fumarate + L-arginine. The protein operates within amino-acid biosynthesis; L-arginine biosynthesis; L-arginine from L-ornithine and carbamoyl phosphate: step 3/3. The polypeptide is Argininosuccinate lyase (Bacillus cereus (strain ATCC 10987 / NRS 248)).